Consider the following 460-residue polypeptide: MHPSDQTIFALATGQLPSAIAMVRVSGPRAGDLLTALTGSLPPPRTARRVLIRDQNQDLIDDGVALWFAGPASATGEDVAEFHIHGGRAVLAALVRALSAFDGVRPAEPGEFTRRAFENGKLDLTEAEGLDDLIHADTEAQRRQAVRQLGGLLGDRARRWRAQIIEATALIEAGIDFADEGDVQGELMAPALQTIAALHDEIAEVLAAQGRSERLRDGMVVAIAGPPNVGKSTLINRLARREVAIVSPHAGTTRDVIEVQLDLGGYPVTVIDTAGIRESNDPVEQEGVRRARARAAEADLVLWLGEGEMTGDAVAASAPVWRVRNKIDLRGGEGDGGPVGLPVEPLAAALRQTDGAWGGNAAFEISALRGQGLGELIAAIEDFAAQYFASGETALISRARHRTLLQDAAAMLQRSLQHDLPAELVAEELRLAGVALGRLLGRVDVEDVLGEIFSRFCIGK.

The (6S)-5-formyl-5,6,7,8-tetrahydrofolate site is built by Arg24, Glu81, and Lys121. A TrmE-type G domain is found at 218–385; that stretch reads GMVVAIAGPP…LIAAIEDFAA (168 aa). GTP contacts are provided by residues 228–233, 247–253, and 272–275; these read NVGKST, SPHAGTT, and DTAG. Mg(2+) contacts are provided by Ser232 and Thr253. Lys460 provides a ligand contact to (6S)-5-formyl-5,6,7,8-tetrahydrofolate.

The protein belongs to the TRAFAC class TrmE-Era-EngA-EngB-Septin-like GTPase superfamily. TrmE GTPase family. As to quaternary structure, homodimer. Heterotetramer of two MnmE and two MnmG subunits. K(+) serves as cofactor.

The protein localises to the cytoplasm. Exhibits a very high intrinsic GTPase hydrolysis rate. Involved in the addition of a carboxymethylaminomethyl (cmnm) group at the wobble position (U34) of certain tRNAs, forming tRNA-cmnm(5)s(2)U34. In Rhodopseudomonas palustris (strain BisB5), this protein is tRNA modification GTPase MnmE.